The primary structure comprises 133 residues: uncharacterized protein (133 aa).

The 130-residue stretch at 1-130 (MPNIVEIAVS…GIIHVIDNVI (130 aa)) folds into the FAS1 domain.

This is an uncharacterized protein from Synechocystis sp. (strain ATCC 27184 / PCC 6803 / Kazusa).